A 107-amino-acid polypeptide reads, in one-letter code: Sperm-specific class P protein 34 (107 aa).

The tract at residues 1–26 is disordered; it reads MINVDPPTGNYPATGGNSTHNITSES. One can recognise an MSP domain in the interval 1–107; it reads MINVDPPTGN…GEIIVKLIAA (107 aa). The segment covering 15–25 has biased composition (polar residues); sequence GGNSTHNITSE.

As to expression, expressed at higher level in testis.

This is Sperm-specific class P protein 34 (ssp-34) from Caenorhabditis elegans.